Consider the following 188-residue polypeptide: Holliday junction branch migration complex subunit RuvA (188 aa).

A domain I region spans residues 1–62; that stretch reads MIVGVRGVLV…EDAQLLYGFL (62 aa). A domain II region spans residues 63-135; it reads ELGEKKLFER…LSGFDTELII (73 aa). Residues 135-139 are flexible linker; sequence ISASE. The segment at 140–188 is domain III; that stretch reads PKSLAVAQASEALESLGFKKDKISKALGSCSAVDTAILVKEALKLLQTI.

The protein belongs to the RuvA family. As to quaternary structure, homotetramer. Forms an RuvA(8)-RuvB(12)-Holliday junction (HJ) complex. HJ DNA is sandwiched between 2 RuvA tetramers; dsDNA enters through RuvA and exits via RuvB. An RuvB hexamer assembles on each DNA strand where it exits the tetramer. Each RuvB hexamer is contacted by two RuvA subunits (via domain III) on 2 adjacent RuvB subunits; this complex drives branch migration. In the full resolvosome a probable DNA-RuvA(4)-RuvB(12)-RuvC(2) complex forms which resolves the HJ.

Its subcellular location is the cytoplasm. In terms of biological role, the RuvA-RuvB-RuvC complex processes Holliday junction (HJ) DNA during genetic recombination and DNA repair, while the RuvA-RuvB complex plays an important role in the rescue of blocked DNA replication forks via replication fork reversal (RFR). RuvA specifically binds to HJ cruciform DNA, conferring on it an open structure. The RuvB hexamer acts as an ATP-dependent pump, pulling dsDNA into and through the RuvAB complex. HJ branch migration allows RuvC to scan DNA until it finds its consensus sequence, where it cleaves and resolves the cruciform DNA. This chain is Holliday junction branch migration complex subunit RuvA, found in Sulfurimonas denitrificans (strain ATCC 33889 / DSM 1251) (Thiomicrospira denitrificans (strain ATCC 33889 / DSM 1251)).